The primary structure comprises 218 residues: Thiopurine S-methyltransferase (218 aa).

Residues tryptophan 10, leucine 45, glutamate 66, and arginine 123 each coordinate S-adenosyl-L-methionine.

Belongs to the class I-like SAM-binding methyltransferase superfamily. TPMT family.

It is found in the cytoplasm. The enzyme catalyses S-adenosyl-L-methionine + a thiopurine = S-adenosyl-L-homocysteine + a thiopurine S-methylether.. This is Thiopurine S-methyltransferase from Pseudomonas aeruginosa (strain ATCC 15692 / DSM 22644 / CIP 104116 / JCM 14847 / LMG 12228 / 1C / PRS 101 / PAO1).